We begin with the raw amino-acid sequence, 103 residues long: Transcriptional regulator WhiB7 (103 aa).

Residues cysteine 17, cysteine 49, cysteine 52, and cysteine 58 each contribute to the [4Fe-4S] cluster site. The 4Fe-4S Wbl-type domain occupies 25–82; the sequence is PCHVGDPDLWFAENPGDLERAKALCAGCPIRVQCLTAALERQEPWGVWGGEILDRGSI. Residues 82–103 are disordered; it reads IVARKRPRGRPRKDSGGNPAAA.

The protein belongs to the WhiB family. It depends on [4Fe-4S] cluster as a cofactor. In terms of processing, the Fe-S cluster can be nitrosylated by nitric oxide (NO). Post-translationally, upon Fe-S cluster removal intramolecular disulfide bonds are formed.

The protein localises to the cytoplasm. Acts as a transcriptional regulator. Probably redox-responsive. The apo- but not holo-form probably binds DNA. Participates in maintaining a reduced cytoplasmic (MSH/MSSM) environment under normal growth conditions and directly or indirectly controls the concentration of mycothiol (MSH + MSSM). The sequence is that of Transcriptional regulator WhiB7 (whiB7) from Mycolicibacterium smegmatis (strain ATCC 700084 / mc(2)155) (Mycobacterium smegmatis).